A 391-amino-acid chain; its full sequence is Formate-dependent phosphoribosylglycinamide formyltransferase (391 aa).

Residues 20–21 (EL) and Glu80 each bind N(1)-(5-phospho-beta-D-ribosyl)glycinamide. ATP contacts are provided by residues Arg112, Lys153, 158–163 (SSGKGQ), 193–196 (EGFI), and Glu201. The ATP-grasp domain occupies 117–306 (RLAAEDLQIP…EFALHVRAFL (190 aa)). Glu265 and Glu277 together coordinate Mg(2+). Residues Asp284, Lys354, and 361–362 (RR) each bind N(1)-(5-phospho-beta-D-ribosyl)glycinamide.

The protein belongs to the PurK/PurT family. Homodimer.

The enzyme catalyses N(1)-(5-phospho-beta-D-ribosyl)glycinamide + formate + ATP = N(2)-formyl-N(1)-(5-phospho-beta-D-ribosyl)glycinamide + ADP + phosphate + H(+). Its pathway is purine metabolism; IMP biosynthesis via de novo pathway; N(2)-formyl-N(1)-(5-phospho-D-ribosyl)glycinamide from N(1)-(5-phospho-D-ribosyl)glycinamide (formate route): step 1/1. Its function is as follows. Involved in the de novo purine biosynthesis. Catalyzes the transfer of formate to 5-phospho-ribosyl-glycinamide (GAR), producing 5-phospho-ribosyl-N-formylglycinamide (FGAR). Formate is provided by PurU via hydrolysis of 10-formyl-tetrahydrofolate. This is Formate-dependent phosphoribosylglycinamide formyltransferase from Photobacterium profundum (strain SS9).